The sequence spans 1268 residues: uncharacterized protein (1268 aa).

Residues 191–206 are compositionally biased toward low complexity; the sequence is KIVSVKPSKSSQQVDV. Disordered stretches follow at residues 191 to 235 and 253 to 273; these read KIVS…SKKK and NCRS…SKGC. Positions 223–235 are enriched in basic and acidic residues; that stretch reads RKPEKSSQDSKKK. The segment at 239–256 adopts a CCHC-type zinc-finger fold; sequence PTCFYCNKKGHYATNCRS. Residues 465 to 644 enclose the Reverse transcriptase domain; sequence EMGVIVPITY…KQVTFLGFVD (180 aa). One can recognise an Integrase catalytic domain in the interval 844-997; the sequence is VPEAPWKRIH…TPAECHFGRK (154 aa). Residues 1092-1268 form a disordered region; it reads GDYSRSSVNP…RRERVRTTWR (177 aa). 2 stretches are compositionally biased toward polar residues: residues 1127 to 1143 and 1160 to 1169; these read VTSN…SRIT and GSCSPTNNDV. A compositionally biased stretch (low complexity) spans 1208–1221; it reads PSTSTGTPRGSTST. Polar residues predominate over residues 1222–1249; it reads QLGQASTRNGSRYTASGRNPSCQGNRYS. A compositionally biased stretch (basic and acidic residues) spans 1257-1268; it reads TARRERVRTTWR.

This is an uncharacterized protein from Caenorhabditis elegans.